A 26-amino-acid polypeptide reads, in one-letter code: Acyl carrier protein (26 aa).

Positions 2-26 (SDIEQRIKQAVAEQLGMRAEEIKNE) constitute a Carrier domain.

This sequence belongs to the acyl carrier protein (ACP) family. In terms of processing, 4'-phosphopantetheine is transferred from CoA to a specific serine of apo-ACP by AcpS. This modification is essential for activity because fatty acids are bound in thioester linkage to the sulfhydryl of the prosthetic group.

The protein localises to the cytoplasm. The protein operates within lipid metabolism; fatty acid biosynthesis. Carrier of the growing fatty acid chain in fatty acid biosynthesis. This Acinetobacter calcoaceticus protein is Acyl carrier protein (acpP).